Here is a 269-residue protein sequence, read N- to C-terminus: MKTPVELAISGMQTLHVQHRGRSGYRVKVRPSYVDETLFGSPAGTRPVPPDFDPPWMKKANRSRGVGTGVSQALGANGSCESTSSSGSTPTLTPRKKNKYRLISHTPSYCDESLFGSRQEGAGWEAKWMARGDAAKLHALFWTPPATPRGSHSPRPRETPVRCVHPADLSKTEHRVMASSRRLSVDGLDTPRPLRRERSHSLTHPNVPSTGHTPASSPCTSGPRDPRPAPSGVTFRSPLVTPRAGSVSVSVPTTPRQGGATQKTKPPWK.

A Nuclear export signal motif is present at residues 5–17 (VELAISGMQTLHV). Disordered regions lie at residues 67-94 (GTGV…TLTP) and 145-269 (PATP…PPWK). Over residues 79 to 93 (SCESTSSSGSTPTLT) the composition is skewed to low complexity. The short motif at 92–108 (LTPRKKNKYRLISHTPS) is the Nuclear localization signal element. The interaction with RBPJ/RBPSUH stretch occupies residues 128–156 (WMARGDAAKLHALFWTPPATPRGSHSPRP). Positions 156–269 (PRETPVRCVH…ATQKTKPPWK (114 aa)) are interaction with tubulin. Polar residues-rich tracts occupy residues 202–220 (LTHP…SPCT) and 247–269 (VSVS…PPWK).

The protein belongs to the RITA family. Interacts with RBPJ/RBPSUH.

It is found in the cytoplasm. Its subcellular location is the nucleus. The protein resides in the cytoskeleton. It localises to the microtubule organizing center. The protein localises to the centrosome. Tubulin-binding protein that acts as a negative regulator of Notch signaling pathway. Shuttles between the cytoplasm and the nucleus and mediates the nuclear export of RBPJ/RBPSUH, thereby preventing the interaction between RBPJ/RBPSUH and NICD product of Notch proteins (Notch intracellular domain), leading to down-regulate Notch-mediated transcription. May play a role in neurogenesis. This Bos taurus (Bovine) protein is RBPJ-interacting and tubulin-associated protein 1 (RITA1).